We begin with the raw amino-acid sequence, 1784 residues long: Histone acetyltransferase KAT6B (1784 aa).

The SAMD1-like winged helix (WH) domain maps to 1-77 (MVKLANPLYT…LASYKDPDNP (77 aa)). The interval 72-98 (KDPDNPGRFSSVKPGTFPKSTKESRGS) is disordered. Residues 103–176 (RNVDWNKLLR…KDGPQYRVNY (74 aa)) form the H15 domain. PHD-type zinc fingers lie at residues 213-272 (IPIC…CKTC) and 269-320 (CKTC…CRPK). A Phosphoserine modification is found at Ser-355. The tract at residues 361-425 (GSMNAFTGRG…ECESGVEDCG (65 aa)) is negatively regulates HAT activity. Residue Lys-381 forms a Glycyl lysine isopeptide (Lys-Gly) (interchain with G-Cter in SUMO2) linkage. The region spanning 423-697 (DCGRYPSVIE…LDPDSLRWTP (275 aa)) is the MYST-type HAT domain. The interval 426-716 (RYPSVIEFGK…EEEREAEKEA (291 aa)) is catalytic. A C2HC MYST-type zinc finger spans residues 456-481 (LYLCEFCLKYMKSKNILLRHSKKCGW). An interaction with BRPF1 region spans residues 460–716 (EFCLKYMKSK…EEEREAEKEA (257 aa)). Lys-523 is subject to N6-acetyllysine; by autocatalysis. Acetyl-CoA is bound by residues 564–568 (SCIMI) and 573–579 (QRQGFGR). Glu-599 serves as the catalytic Proton donor/acceptor. Residue Ser-603 participates in acetyl-CoA binding. 4 disordered regions span residues 730-884 (EQEV…RPMP), 904-1163 (RKAF…FKEV), 1195-1273 (SCNS…FQDC), and 1291-1330 (QSPQ…SPSV). Over residues 733–751 (VLSTRANSRQSPAKVQSKN) the composition is skewed to polar residues. An N6-acetyllysine mark is found at Lys-746, Lys-750, and Lys-752. Ser-756 carries the post-translational modification Phosphoserine. The span at 777 to 819 (SEEEEEEEEDEEEEDEEEEEEEEEDEEEEEEEEEEEEEEEEEN) shows a compositional bias: acidic residues. Residues 820 to 831 (IQSSPPRLTKPQ) are compositionally biased toward polar residues. The span at 835–854 (IKRKRPFVLKKKRGRKRRRI) shows a compositional bias: basic residues. Residues 856–869 (SSVTTETISETTEV) show a composition bias toward low complexity. Basic residues predominate over residues 904–914 (RKAFQHQPGKK). Composition is skewed to basic and acidic residues over residues 938-957 (MNDD…EPLK) and 1055-1064 (EKPEDDLIKP). Residues 1065–1087 (EEEEEEEEEEEEEEGEEEEEEGG) show a composition bias toward acidic residues. 2 stretches are compositionally biased toward basic and acidic residues: residues 1088 to 1101 (NVEK…SQEK) and 1107 to 1118 (SPEKEDSARLDD). Residues 1119–1128 (HEEEEEEDEE) show a composition bias toward acidic residues. The segment covering 1144 to 1163 (HMESAEVEKEELPRESFKEV) has biased composition (basic and acidic residues). A compositionally biased stretch (acidic residues) spans 1209-1218 (AVPESDEEPP). The segment covering 1224–1240 (QKQDQKNSKEVDTEFKE) has biased composition (basic and acidic residues). Composition is skewed to polar residues over residues 1251–1263 (ETVQ…TQES) and 1291–1302 (QSPQIATTLDDC). An interaction with RUNX1 and RUNX2 region spans residues 1271 to 1784 (QDCAETQEAC…QSLNGSYMRR (514 aa)). Residues 1305–1322 (SDHSSPVSSVHSHPGQSV) show a composition bias toward low complexity.

This sequence belongs to the MYST (SAS/MOZ) family. In terms of assembly, component of the MOZ/MORF complex composed at least of ING5, KAT6A, KAT6B, MEAF6 and one of BRPF1, BRD1/BRPF2 and BRPF3. Interacts with RUNX1 and RUNX2. Post-translationally, autoacetylation at Lys-523 is required for proper function.

It localises to the nucleus. The catalysed reaction is L-lysyl-[protein] + acetyl-CoA = N(6)-acetyl-L-lysyl-[protein] + CoA + H(+). In terms of biological role, histone acetyltransferase which may be involved in both positive and negative regulation of transcription. Required for RUNX2-dependent transcriptional activation. May be involved in cerebral cortex development. Component of the MOZ/MORF complex which has a histone H3 acetyltransferase activity. This Macaca fascicularis (Crab-eating macaque) protein is Histone acetyltransferase KAT6B (KAT6B).